Consider the following 190-residue polypeptide: UPF0301 protein TC_0483 (190 aa).

It belongs to the UPF0301 (AlgH) family.

This chain is UPF0301 protein TC_0483, found in Chlamydia muridarum (strain MoPn / Nigg).